Here is a 133-residue protein sequence, read N- to C-terminus: UPF0102 protein bll0669 (133 aa).

It belongs to the UPF0102 family.

This chain is UPF0102 protein bll0669, found in Bradyrhizobium diazoefficiens (strain JCM 10833 / BCRC 13528 / IAM 13628 / NBRC 14792 / USDA 110).